A 445-amino-acid polypeptide reads, in one-letter code: Sterile alpha motif domain-containing protein 7 (445 aa).

The segment at 98 to 172 (HAARAEMEMY…HLQGNPILLA (75 aa)) is required for localization to nuclear polycomb bodies. A disordered region spans residues 193–282 (YQKPPESDTE…WDDGKGKPSE (90 aa)). Over residues 227–244 (IKDPDIEVDNQQKPRVAD) the composition is skewed to basic and acidic residues. The SAM domain maps to 324–378 (WTVDDVYNFIRSLPGCSDYAQVFKDHAIDGETLPLLTEQHLRGTMGLKLGPALKI). A disordered region spans residues 425–445 (SIPGPQDLLSPKRTEQDVMRN). Over residues 434 to 445 (SPKRTEQDVMRN) the composition is skewed to basic and acidic residues.

Monomer, homodimer and homooligomer. Component of a Polycomb group (PcG) multiprotein PRC1-like complex. Interacts with PHC2 and NR2E3. Interacts with RNF1 in a PHC2-dependent manner. Interacts with SAMD11. In terms of tissue distribution, expressed in the retina and the pineal gland. In the retina, it is predominantly expressed in the outer nuclear layer and developing rod photoreceptors.

The protein resides in the nucleus. Its subcellular location is the cytoplasm. Its function is as follows. Component of a Polycomb group (PcG) multiprotein PRC1-like complex, essential for establishing rod photoreceptor cell identity and function by silencing nonrod gene expression in developing rod photoreceptor cells. Via its association with the PRC1-like complex, promotes epigenetic repressive marks H3K27me3 and H2AK119ub marks in nonrod genes, silencing their transcription. Represses Crx-controlled photoreceptor-specific gene expression. This chain is Sterile alpha motif domain-containing protein 7 (Samd7), found in Mus musculus (Mouse).